The primary structure comprises 1066 residues: Ubiquitin conjugation factor E4 A (1066 aa).

The tract at residues 33 to 57 is disordered; sequence KEQLKQQSDELPASPDDSDNSVSES. Position 386 is an N6-acetyllysine (K386). The U-box domain occupies 987–1061; that stretch reads DACDEFLDPI…QRWLAERKQQ (75 aa).

Belongs to the ubiquitin conjugation factor E4 family.

The protein resides in the cytoplasm. The catalysed reaction is S-ubiquitinyl-[E2 ubiquitin-conjugating enzyme]-L-cysteine + [acceptor protein]-L-lysine = [E2 ubiquitin-conjugating enzyme]-L-cysteine + N(6)-ubiquitinyl-[acceptor protein]-L-lysine.. The protein operates within protein modification; protein ubiquitination. Functionally, ubiquitin-protein ligase that probably functions as an E3 ligase in conjunction with specific E1 and E2 ligases. May also function as an E4 ligase mediating the assembly of polyubiquitin chains on substrates ubiquitinated by another E3 ubiquitin ligase. Mediates 'Lys-48'-linked polyubiquitination of substrates. The sequence is that of Ubiquitin conjugation factor E4 A from Pongo abelii (Sumatran orangutan).